Here is a 415-residue protein sequence, read N- to C-terminus: Gamma-glutamyl phosphate reductase (415 aa).

This sequence belongs to the gamma-glutamyl phosphate reductase family.

It localises to the cytoplasm. It carries out the reaction L-glutamate 5-semialdehyde + phosphate + NADP(+) = L-glutamyl 5-phosphate + NADPH + H(+). The protein operates within amino-acid biosynthesis; L-proline biosynthesis; L-glutamate 5-semialdehyde from L-glutamate: step 2/2. Functionally, catalyzes the NADPH-dependent reduction of L-glutamate 5-phosphate into L-glutamate 5-semialdehyde and phosphate. The product spontaneously undergoes cyclization to form 1-pyrroline-5-carboxylate. This chain is Gamma-glutamyl phosphate reductase, found in Leuconostoc citreum (strain KM20).